We begin with the raw amino-acid sequence, 383 residues long: tRNA(Met) cytidine acetate ligase (383 aa).

ATP contacts are provided by residues 7–20 (ISEYNPFHNGHLYQ), glycine 102, asparagine 160, and 181–182 (RI).

The protein belongs to the TmcAL family.

It localises to the cytoplasm. The catalysed reaction is cytidine(34) in elongator tRNA(Met) + acetate + ATP = N(4)-acetylcytidine(34) in elongator tRNA(Met) + AMP + diphosphate. In terms of biological role, catalyzes the formation of N(4)-acetylcytidine (ac(4)C) at the wobble position of elongator tRNA(Met), using acetate and ATP as substrates. First activates an acetate ion to form acetyladenylate (Ac-AMP) and then transfers the acetyl group to tRNA to form ac(4)C34. The polypeptide is tRNA(Met) cytidine acetate ligase (Exiguobacterium sibiricum (strain DSM 17290 / CCUG 55495 / CIP 109462 / JCM 13490 / 255-15)).